Reading from the N-terminus, the 289-residue chain is Transmembrane protein 163 (289 aa).

A disordered region spans residues 1 to 65; that stretch reads MEPAAGIQRR…ESGQFSDGLE (65 aa). Topologically, residues 1-88 are cytoplasmic; sequence MEPAAGIQRR…HEAQNYRKKA (88 aa). Position 11 is a phosphoserine (Ser11). The span at 16–36 shows a compositional bias: pro residues; that stretch reads TVPPPPRGHAPPAAAPGPAPL. A required for interaction with MCOLN1 region spans residues 42–72; sequence EPPQLEEERQVRISESGQFSDGLEDRGLLES. Ser55, Ser57, and Ser61 each carry phosphoserine. A helical transmembrane segment spans residues 89–109; the sequence is LWVSWFSIIVTLALAVAAFTV. The Extracellular portion of the chain corresponds to 110 to 116; the sequence is SVMRYSA. The chain crosses the membrane as a helical span at residues 117–137; that stretch reads SAFGFAFDAILDVLSSAIVLW. The Cytoplasmic portion of the chain corresponds to 138–150; that stretch reads RYSNAAAVHSAHR. The helical transmembrane segment at 151-171 threads the bilayer; sequence EYIACVILGVIFLLSSICIVV. The Extracellular segment spans residues 172 to 187; that stretch reads KAIHDLSTRLLPEVDD. Residues 188-208 form a helical membrane-spanning segment; that stretch reads FLFSVSILSGILCSILAVLKF. The Cytoplasmic portion of the chain corresponds to 209–217; it reads MLGKVLTSR. Residues 218–238 traverse the membrane as a helical segment; that stretch reads ALITDGFNSLVGGVMGFSILL. At 239 to 255 the chain is on the extracellular side; that stretch reads SAEVFKHDSAVWYLDGS. The helical transmembrane segment at 256-276 threads the bilayer; it reads IGVLIGLTIFAYGVKLLIDMV. Topologically, residues 277–289 are cytoplasmic; sequence PRVRQTRHYEMFE.

Belongs to the TMEM163 family. Homodimer. Interacts with MCOLN1/TRPML1. Interacts with SLC30A1, SLC30A2, SLC30A3 and SLC30A4. As to expression, widely expressed. High expression is detected in brain, lung and testis.

It is found in the cytoplasmic vesicle. Its subcellular location is the secretory vesicle. The protein localises to the synaptic vesicle membrane. The protein resides in the early endosome membrane. It localises to the late endosome membrane. It is found in the lysosome membrane. Its subcellular location is the cell membrane. The enzyme catalyses Zn(2+)(in) = Zn(2+)(out). Its function is as follows. Zinc ion transporter that mediates zinc efflux and plays a crucial role in intracellular zinc homeostasis. Binds the divalent cations Zn(2+), Ni(2+), and to a minor extent Cu(2+). Is a functional modulator of P2X purinoceptors, including P2RX1, P2RX3, P2RX4 and P2RX7. Plays a role in central nervous system development and is required for myelination, and survival and proliferation of oligodendrocytes. This chain is Transmembrane protein 163 (TMEM163), found in Homo sapiens (Human).